The following is a 461-amino-acid chain: Chromosomal replication initiator protein DnaA (461 aa).

The tract at residues 1–87 is domain I, interacts with DnaA modulators; sequence MAVSLWQQCI…IGSRPSAKPV (87 aa). Residues 87–124 form a domain II region; sequence VVQATAAIRPKPAASKAVEKPTFNAPQAEPAITANHRS. Residues 125–341 form a domain III, AAA+ region region; that stretch reads NINPTYQFDN…GALNRVIANA (217 aa). The ATP site is built by glycine 169, glycine 171, lysine 172, and threonine 173. Residues 342–461 form a domain IV, binds dsDNA region; that stretch reads NFTGRPITID…YANLIRTLSS (120 aa).

This sequence belongs to the DnaA family. Oligomerizes as a right-handed, spiral filament on DNA at oriC.

It localises to the cytoplasm. In terms of biological role, plays an essential role in the initiation and regulation of chromosomal replication. ATP-DnaA binds to the origin of replication (oriC) to initiate formation of the DNA replication initiation complex once per cell cycle. Binds the DnaA box (a 9 base pair repeat at the origin) and separates the double-stranded (ds)DNA. Forms a right-handed helical filament on oriC DNA; dsDNA binds to the exterior of the filament while single-stranded (ss)DNA is stabiized in the filament's interior. The ATP-DnaA-oriC complex binds and stabilizes one strand of the AT-rich DNA unwinding element (DUE), permitting loading of DNA polymerase. After initiation quickly degrades to an ADP-DnaA complex that is not apt for DNA replication. Binds acidic phospholipids. The chain is Chromosomal replication initiator protein DnaA from Shewanella piezotolerans (strain WP3 / JCM 13877).